Here is a 1057-residue protein sequence, read N- to C-terminus: Probable E3 ubiquitin-protein ligase HERC4 (1057 aa).

7 RCC1 repeats span residues 1–51, 52–101, 102–154, 156–207, 208–259, 261–311, and 313–366; these read MLCW…FVLD, DGTV…ALND, KGQV…ALSK, SEVF…VLTL, SGAI…ALTK, GGVF…AFVP, and SGRI…CVKR. The 328-residue stretch at 730–1057 folds into the HECT domain; it reads KNIDYKKPLK…IDHNEGFSLI (328 aa). The active-site Glycyl thioester intermediate is the Cys1025.

It is found in the cytoplasm. The protein localises to the cytosol. It catalyses the reaction S-ubiquitinyl-[E2 ubiquitin-conjugating enzyme]-L-cysteine + [acceptor protein]-L-lysine = [E2 ubiquitin-conjugating enzyme]-L-cysteine + N(6)-ubiquitinyl-[acceptor protein]-L-lysine.. It functions in the pathway protein modification; protein ubiquitination. In terms of biological role, probable E3 ubiquitin-protein ligase involved in either protein trafficking or in the distribution of cellular structures. Required for spermatozoon maturation and fertility, and for the removal of the cytoplasmic droplet of the spermatozoon. E3 ubiquitin-protein ligases accept ubiquitin from an E2 ubiquitin-conjugating enzyme in the form of a thioester and then directly transfer it to targeted substrates. The sequence is that of Probable E3 ubiquitin-protein ligase HERC4 (Herc4) from Rattus norvegicus (Rat).